A 152-amino-acid polypeptide reads, in one-letter code: 3-dehydroquinate dehydratase (152 aa).

The Proton acceptor role is filled by Tyr-22. Substrate is bound by residues Asn-73, His-79, and Asp-86. His-99 acts as the Proton donor in catalysis. Substrate-binding positions include 100-101 and Arg-110; that span reads LS.

It belongs to the type-II 3-dehydroquinase family. Homododecamer.

The catalysed reaction is 3-dehydroquinate = 3-dehydroshikimate + H2O. Its pathway is metabolic intermediate biosynthesis; chorismate biosynthesis; chorismate from D-erythrose 4-phosphate and phosphoenolpyruvate: step 3/7. Functionally, catalyzes a trans-dehydration via an enolate intermediate. This is 3-dehydroquinate dehydratase from Gemmatimonas aurantiaca (strain DSM 14586 / JCM 11422 / NBRC 100505 / T-27).